A 946-amino-acid polypeptide reads, in one-letter code: Probable inactive ATP-dependent zinc metalloprotease FTSHI 1, chloroplastic (946 aa).

A chloroplast-targeting transit peptide spans 1 to 54 (MASIDNVFSLGTRFSIPENPKRSILKHATTSSFSARTQTRWRAPILRRSFTVLC). Transmembrane regions (helical) follow at residues 289–309 (AVIA…VFAV), 320–340 (VVWP…LGVL), and 369–389 (VASS…MVLL). An ATP-binding site is contributed by 470-477 (GPPGCGKT).

The protein in the N-terminal section; belongs to the AAA ATPase family. This sequence in the C-terminal section; belongs to the peptidase M41 family. Oligomer.

Its subcellular location is the plastid. The protein resides in the chloroplast inner membrane. Functions in chloroplast biogenesis and chloroplast division. Required for plastid development during embryogenesis. Might be involved in chaperone functions or play a structural role in the thylakoid FtsH complex. The sequence is that of Probable inactive ATP-dependent zinc metalloprotease FTSHI 1, chloroplastic from Arabidopsis thaliana (Mouse-ear cress).